The chain runs to 321 residues: Holliday junction branch migration complex subunit RuvB (321 aa).

Residues 1–173 (MMMEQECVDD…FGIISRLEFY (173 aa)) form a large ATPase domain (RuvB-L) region. Residues I12, R13, G54, K57, T58, T59, 120 to 122 (EDF), R163, Y173, and R210 contribute to the ATP site. T58 contacts Mg(2+). Residues 174-244 (TPAELACIVK…LASDALARMD (71 aa)) form a small ATPAse domain (RuvB-S) region. The tract at residues 247–321 (ELGLDQMDRK…KAYRHMNLLA (75 aa)) is head domain (RuvB-H). DNA is bound by residues R302 and R307.

This sequence belongs to the RuvB family. As to quaternary structure, homohexamer. Forms an RuvA(8)-RuvB(12)-Holliday junction (HJ) complex. HJ DNA is sandwiched between 2 RuvA tetramers; dsDNA enters through RuvA and exits via RuvB. An RuvB hexamer assembles on each DNA strand where it exits the tetramer. Each RuvB hexamer is contacted by two RuvA subunits (via domain III) on 2 adjacent RuvB subunits; this complex drives branch migration. In the full resolvosome a probable DNA-RuvA(4)-RuvB(12)-RuvC(2) complex forms which resolves the HJ.

The protein localises to the cytoplasm. It carries out the reaction ATP + H2O = ADP + phosphate + H(+). Its function is as follows. The RuvA-RuvB-RuvC complex processes Holliday junction (HJ) DNA during genetic recombination and DNA repair, while the RuvA-RuvB complex plays an important role in the rescue of blocked DNA replication forks via replication fork reversal (RFR). RuvA specifically binds to HJ cruciform DNA, conferring on it an open structure. The RuvB hexamer acts as an ATP-dependent pump, pulling dsDNA into and through the RuvAB complex. RuvB forms 2 homohexamers on either side of HJ DNA bound by 1 or 2 RuvA tetramers; 4 subunits per hexamer contact DNA at a time. Coordinated motions by a converter formed by DNA-disengaged RuvB subunits stimulates ATP hydrolysis and nucleotide exchange. Immobilization of the converter enables RuvB to convert the ATP-contained energy into a lever motion, pulling 2 nucleotides of DNA out of the RuvA tetramer per ATP hydrolyzed, thus driving DNA branch migration. The RuvB motors rotate together with the DNA substrate, which together with the progressing nucleotide cycle form the mechanistic basis for DNA recombination by continuous HJ branch migration. Branch migration allows RuvC to scan DNA until it finds its consensus sequence, where it cleaves and resolves cruciform DNA. The polypeptide is Holliday junction branch migration complex subunit RuvB (Oleidesulfovibrio alaskensis (strain ATCC BAA-1058 / DSM 17464 / G20) (Desulfovibrio alaskensis)).